Reading from the N-terminus, the 89-residue chain is Small ribosomal subunit protein uS15 (89 aa).

The protein belongs to the universal ribosomal protein uS15 family. Part of the 30S ribosomal subunit. Forms a bridge to the 50S subunit in the 70S ribosome, contacting the 23S rRNA.

Functionally, one of the primary rRNA binding proteins, it binds directly to 16S rRNA where it helps nucleate assembly of the platform of the 30S subunit by binding and bridging several RNA helices of the 16S rRNA. Forms an intersubunit bridge (bridge B4) with the 23S rRNA of the 50S subunit in the ribosome. The chain is Small ribosomal subunit protein uS15 from Pseudomonas fluorescens (strain SBW25).